A 360-amino-acid chain; its full sequence is Peptide chain release factor 1 (360 aa).

Gln-235 carries the N5-methylglutamine modification. Residues 285–314 (KRQQAEASTRRNLLGSGDRSDRNRTYNFPQ) are disordered.

Belongs to the prokaryotic/mitochondrial release factor family. Methylated by PrmC. Methylation increases the termination efficiency of RF1.

The protein resides in the cytoplasm. Its function is as follows. Peptide chain release factor 1 directs the termination of translation in response to the peptide chain termination codons UAG and UAA. The polypeptide is Peptide chain release factor 1 (Klebsiella pneumoniae subsp. pneumoniae (strain ATCC 700721 / MGH 78578)).